The chain runs to 541 residues: Transmembrane protein 151 homolog (541 aa).

The next 3 membrane-spanning stretches (helical) occupy residues G27 to F47, Y73 to W93, and P254 to L274. A disordered region spans residues A503–P541. Residues S515–N535 show a composition bias toward low complexity.

This sequence belongs to the TMEM151 family.

It is found in the membrane. In Caenorhabditis elegans, this protein is Transmembrane protein 151 homolog.